The primary structure comprises 395 residues: MATFTDAEIDELFETSGTVIDSIITAQGKPVETVGRSAIPRGKTKALSSAWEKHGSVQSPASQDTPDRQDRSDKQLSTPEQVTPHDSPPATSTDQPPTQAADEAGDTQLKTGASNSLLSMLDKLSNKSSNAKKGPWSSPQEGHHQRPTQQQGSQPSRGNSQERPQNQVKAAPGSQGTDANIAYHGQWEESQLSAGATHHALRSGQSQDNTPAPVDHVQLPVDFVQAMMSMMEAISQRVSKVDYQLDLVLKQTSSIPMMRSEIQQLKTSVAVMEANLGMMKILDPGCANVSSLSDLRAVARSHPVLVSGPGDPSPYVTQGGEMALNKLSQPVQHPSELIKPAMVSGPDIGVEKDTVRALIMSRPMHPSSSAKLLSKLDAAGSIEEIRKIKRLALNG.

Disordered stretches follow at residues 34–104 (VGRS…ADEA), 126–179 (NKSS…GTDA), and 192–214 (LSAGATHHALRSGQSQDNTPAPV). Residues 65-74 (TPDRQDRSDK) show a composition bias toward basic and acidic residues. Composition is skewed to polar residues over residues 89 to 98 (PATSTDQPPT) and 147 to 178 (PTQQQGSQPSRGNSQERPQNQVKAAPGSQGTD). The multimerization stretch occupies residues 222-285 (DFVQAMMSMM…LGMMKILDPG (64 aa)).

The protein belongs to the rubulavirus/avulavirus P protein family. In terms of assembly, homotetramer. Interacts (via multimerization domain) with polymerase L; this interaction forms the polymerase L-P complex. Interacts (via N-terminus) with N0 (via Ncore); this interaction allows P to chaperon N0 to avoid N polymerization before encapsidation. Interacts (via C-terminus) with N-RNA template; this interaction positions the polymerase on the template for both transcription and replication.

Essential cofactor of the RNA polymerase L that plays a central role in the transcription and replication by forming the polymerase complex with RNA polymerase L and recruiting L to the genomic N-RNA template for RNA synthesis. Also plays a central role in the encapsidation of nascent RNA chains by forming the encapsidation complex with the nucleocapsid protein N (N-P complex). Acts as a chaperone for newly synthesized free N protein, so-called N0, allowing encapsidation of nascent RNA chains during replication. The nucleoprotein protein N prevents excessive phosphorylation of P, which leads to down-regulation of viral transcription/ replication. Participates, together with N, in the formation of viral factories (viroplasms), which are large inclusions in the host cytoplasm where replication takes place. This is Phosphoprotein (P/V) from Newcastle disease virus (strain Ulster/2C) (NDV).